Reading from the N-terminus, the 124-residue chain is Fluoride-specific ion channel FluC (124 aa).

A run of 4 helical transmembrane segments spans residues 6–26 (LLIG…SGIV), 37–57 (LAVN…SLFA), 69–89 (TGFC…FVLV), and 92–112 (GLLF…LIMV). Glycine 73 and threonine 76 together coordinate Na(+).

It belongs to the fluoride channel Fluc/FEX (TC 1.A.43) family.

The protein resides in the cell membrane. The catalysed reaction is fluoride(in) = fluoride(out). Its activity is regulated as follows. Na(+) is not transported, but it plays an essential structural role and its presence is essential for fluoride channel function. In terms of biological role, fluoride-specific ion channel. Important for reducing fluoride concentration in the cell, thus reducing its toxicity. The sequence is that of Fluoride-specific ion channel FluC from Methanocaldococcus jannaschii (strain ATCC 43067 / DSM 2661 / JAL-1 / JCM 10045 / NBRC 100440) (Methanococcus jannaschii).